Reading from the N-terminus, the 553-residue chain is Putative transport protein YidE (553 aa).

5 consecutive transmembrane segments (helical) span residues 4 to 24 (IALTVSILALVAVVGLFIGNV), 28 to 48 (GVGLGIGGVLFGGIIVGHFVS), 65 to 85 (FGLILFVYTIGIQVGPGFFAS), 95 to 115 (LFAVLIVIIGGLVTAILHKLF), and 158 to 178 (MSYAMAYPFGICGILFTMWML). RCK C-terminal domains lie at 191-276 (QQHE…VIGQ) and 279-361 (DTSL…VLGN). The next 6 helical transmembrane spans lie at 371–391 (MLPVFIGIGLGVLLGSIPVFV), 393–413 (GFPAALKLGLAGGPLIMALIL), 439–459 (IVLFLSVVGLKSGGDFIHTLV), 464–484 (LSWIGYGALITAVPLITVGIL), 493–513 (YLTMCGMLAGSMTDPPALAFA), and 533–553 (LVMFLRIITPQLLAVLFWSIG).

Belongs to the AAE transporter (TC 2.A.81) family. YidE subfamily.

The protein localises to the cell membrane. This Escherichia coli O6:H1 (strain CFT073 / ATCC 700928 / UPEC) protein is Putative transport protein YidE.